The chain runs to 121 residues: Large ribosomal subunit protein uL14 (121 aa).

The protein belongs to the universal ribosomal protein uL14 family. In terms of assembly, part of the 50S ribosomal subunit. Forms a cluster with proteins L3 and L19. In the 70S ribosome, L14 and L19 interact and together make contacts with the 16S rRNA in bridges B5 and B8.

Functionally, binds to 23S rRNA. Forms part of two intersubunit bridges in the 70S ribosome. In Synechococcus sp. (strain RCC307), this protein is Large ribosomal subunit protein uL14.